The primary structure comprises 323 residues: MGNRVSREDFEWVYTDQPHADRRREILAKYPEIKSLMKPDPNLIWIIIMMVLTQLAAFYIVKDLDWKWVIFGAYAFGSCINHSMTLGIHEIAHNAAFGNCKAMWNRWFGMFANLPIGIPYSVSFKSYHMDHHRYLGADGVDVDIPTDFEGWFFCTAFRKFIWVILQPLFYAFRPLFINPKPITYLEVINTVAQVTFDILIYYFLGIKSLVYMLAASLLGLGLHPISGHFIAEHYMFLKGHETYSYYGPLNLLTFNVGYHNEHHDFPNIPGKSLPLVRKIAAEYYDNLPHYNSWIKVLYDFVMDDTISPYSRMKRHQKGEMVLE.

G2 is lipidated: N-myristoyl glycine. 2 consecutive transmembrane segments (helical) span residues 41–61 and 68–88; these read PNLI…FYIV and WVIF…TLGI. Residues 89-93 carry the Histidine box-1 motif; it reads HEIAH. The helical transmembrane segment at 107 to 127 threads the bilayer; that stretch reads WFGMFANLPIGIPYSVSFKSY. Residues 128 to 132 carry the Histidine box-2 motif; that stretch reads HMDHH. 3 helical membrane-spanning segments follow: residues 152 to 172, 184 to 204, and 209 to 229; these read FFCT…FYAF, YLEV…YYFL, and LVYM…SGHF. Residues 259–263 carry the Histidine box-3 motif; it reads HNEHH. S307 is subject to Phosphoserine.

This sequence belongs to the fatty acid desaturase type 1 family. DEGS subfamily. As to quaternary structure, interacts with RLBP1; the interaction increases synthesis of chromophore-precursors by DEGS1. Myristoylation can target the enzyme to the mitochondria leading to an increase in ceramide levels.

The protein resides in the mitochondrion membrane. It is found in the endoplasmic reticulum membrane. It catalyses the reaction an N-acylsphinganine + 2 Fe(II)-[cytochrome b5] + O2 + 2 H(+) = an N-acylsphing-4-enine + 2 Fe(III)-[cytochrome b5] + 2 H2O. It carries out the reaction all-trans-retinol = 11-cis-retinol. The enzyme catalyses all-trans-retinol = 9-cis-retinol. The catalysed reaction is all-trans-retinol = 13-cis-retinol. It catalyses the reaction 11-cis-retinol = 13-cis-retinol. It carries out the reaction 11-cis-retinol = 9-cis-retinol. Functionally, has sphingolipid-delta-4-desaturase activity. Converts D-erythro-sphinganine to D-erythro-sphingosine (E-sphing-4-enine). Catalyzes the equilibrium isomerization of retinols. The polypeptide is Sphingolipid delta(4)-desaturase DES1 (DEGS1) (Pongo abelii (Sumatran orangutan)).